The following is a 378-amino-acid chain: O-methyltransferase gsfD (378 aa).

S-adenosyl-L-methionine contacts are provided by residues 219 to 220 (GG), D244, 266 to 267 (DM), and R282. H286 serves as the catalytic Proton acceptor.

This sequence belongs to the class I-like SAM-binding methyltransferase superfamily. Cation-independent O-methyltransferase family.

It carries out the reaction desmethyl-dehydrogriseofulvin + S-adenosyl-L-methionine = dehydrogriseofulvin + S-adenosyl-L-homocysteine + H(+). The protein operates within secondary metabolite biosynthesis; terpenoid biosynthesis. O-methyltransferase; part of the gene cluster that mediates the biosynthesis of griseofulvin, an important antifungal drug that has been in use for a long time for treating dermatophyte infections. The first step of the pathway is the formation of the heptaketide backbone by gsfA which is initiated by priming with acetyl-CoA, followed by sequential condensations of 6 malonyl-CoA units. The resulting benzophenone can undergo a spontaneous dehydration to form norlichexanthone. However, the true precursor for the griseofulvin biosynthesis is not norlichexanthone, but the heptaketide benzophenone that is O-methylated at 3-OH by gsfB to produce griseophenone D which is further methylated at 9-OH by gsfC to yield griseophenone C. Griseophenone C is then substrate of halogenase gsfI which is responsible for the regio-specific chlorination at the C13 position to form griseophenone B. The cytochrome P450 gsfF catalyzes the coupling of orcinol and phloroglucinol rings in griseophenone B to form desmethyl-dehydrogriseofulvin A which is further methylated at 5-OH by gsfD to yield dehydrogriseofulvin. Finally, gsfE performs stereospecific reduction of enone 18 of dehydrogriseofulvin to afford the final product griseofulvin. The sequence is that of O-methyltransferase gsfD from Penicillium aethiopicum.